Reading from the N-terminus, the 279-residue chain is 4-diphosphocytidyl-2-C-methyl-D-erythritol kinase (279 aa).

K9 is a catalytic residue. ATP is bound at residue 93–103 (PMGAGLGGGSS). Residue D135 is part of the active site.

This sequence belongs to the GHMP kinase family. IspE subfamily.

It catalyses the reaction 4-CDP-2-C-methyl-D-erythritol + ATP = 4-CDP-2-C-methyl-D-erythritol 2-phosphate + ADP + H(+). It functions in the pathway isoprenoid biosynthesis; isopentenyl diphosphate biosynthesis via DXP pathway; isopentenyl diphosphate from 1-deoxy-D-xylulose 5-phosphate: step 3/6. Catalyzes the phosphorylation of the position 2 hydroxy group of 4-diphosphocytidyl-2C-methyl-D-erythritol. The protein is 4-diphosphocytidyl-2-C-methyl-D-erythritol kinase of Acinetobacter baylyi (strain ATCC 33305 / BD413 / ADP1).